Consider the following 173-residue polypeptide: Lipoprotein signal peptidase (173 aa).

A run of 3 helical transmembrane segments spans residues 11–31, 69–89, and 93–113; these read FGLI…WIVT, TTRW…AFWM, and QAKG…GNIV. Active-site residues include Asp123 and Asp142. A helical membrane pass occupies residues 134 to 154; sequence PFMIFNVADACITIGVLLLVA.

This sequence belongs to the peptidase A8 family.

It localises to the cell inner membrane. It carries out the reaction Release of signal peptides from bacterial membrane prolipoproteins. Hydrolyzes -Xaa-Yaa-Zaa-|-(S,diacylglyceryl)Cys-, in which Xaa is hydrophobic (preferably Leu), and Yaa (Ala or Ser) and Zaa (Gly or Ala) have small, neutral side chains.. Its pathway is protein modification; lipoprotein biosynthesis (signal peptide cleavage). Its function is as follows. This protein specifically catalyzes the removal of signal peptides from prolipoproteins. In Sphingopyxis alaskensis (strain DSM 13593 / LMG 18877 / RB2256) (Sphingomonas alaskensis), this protein is Lipoprotein signal peptidase.